The sequence spans 431 residues: Glutamate-1-semialdehyde 2,1-aminomutase (431 aa).

Lys269 bears the N6-(pyridoxal phosphate)lysine mark.

The protein belongs to the class-III pyridoxal-phosphate-dependent aminotransferase family. HemL subfamily. In terms of assembly, homodimer. Pyridoxal 5'-phosphate is required as a cofactor.

The protein resides in the cytoplasm. It catalyses the reaction (S)-4-amino-5-oxopentanoate = 5-aminolevulinate. The protein operates within porphyrin-containing compound metabolism; protoporphyrin-IX biosynthesis; 5-aminolevulinate from L-glutamyl-tRNA(Glu): step 2/2. It functions in the pathway porphyrin-containing compound metabolism; chlorophyll biosynthesis. The protein is Glutamate-1-semialdehyde 2,1-aminomutase of Chlorobium chlorochromatii (strain CaD3).